Consider the following 443-residue polypeptide: Ribosomal protein uS12 methylthiotransferase RimO (443 aa).

One can recognise an MTTase N-terminal domain in the interval 5–115 (PNIGFISLGC…VMQHVHKYVP (111 aa)). [4Fe-4S] cluster is bound by residues Cys14, Cys50, Cys79, Cys147, Cys151, and Cys154. A Radical SAM core domain is found at 133–374 (LTPKHYAYLK…MQVQQRISVA (242 aa)). The TRAM domain maps to 377 to 443 (QQKIGKTLAI…ADEYDLWGTY (67 aa)).

The protein belongs to the methylthiotransferase family. RimO subfamily. [4Fe-4S] cluster is required as a cofactor.

It localises to the cytoplasm. The enzyme catalyses L-aspartate(89)-[ribosomal protein uS12]-hydrogen + (sulfur carrier)-SH + AH2 + 2 S-adenosyl-L-methionine = 3-methylsulfanyl-L-aspartate(89)-[ribosomal protein uS12]-hydrogen + (sulfur carrier)-H + 5'-deoxyadenosine + L-methionine + A + S-adenosyl-L-homocysteine + 2 H(+). Functionally, catalyzes the methylthiolation of an aspartic acid residue of ribosomal protein uS12. The polypeptide is Ribosomal protein uS12 methylthiotransferase RimO (Haemophilus ducreyi (strain 35000HP / ATCC 700724)).